The sequence spans 264 residues: ATP synthase subunit a (264 aa).

The next 6 helical transmembrane spans lie at 29–49 (TWHIDSLFFSVGLGVLFLWLF), 90–110 (IAPLALTIFVWVFMMNFMDMI), 134–154 (DLNITFSLALGVFVLIIYYSI), 177–197 (IPVNLLLESVTLIAKPISLAL), 208–228 (LIFILIALMYGANLALSALGV), and 235–255 (LIFHILVITLQAFIFMMLTIV).

Belongs to the ATPase A chain family. In terms of assembly, F-type ATPases have 2 components, CF(1) - the catalytic core - and CF(0) - the membrane proton channel. CF(1) has five subunits: alpha(3), beta(3), gamma(1), delta(1), epsilon(1). CF(0) has three main subunits: a(1), b(2) and c(9-12). The alpha and beta chains form an alternating ring which encloses part of the gamma chain. CF(1) is attached to CF(0) by a central stalk formed by the gamma and epsilon chains, while a peripheral stalk is formed by the delta and b chains.

It localises to the cell inner membrane. In terms of biological role, key component of the proton channel; it plays a direct role in the translocation of protons across the membrane. The protein is ATP synthase subunit a of Shewanella loihica (strain ATCC BAA-1088 / PV-4).